Here is a 125-residue protein sequence, read N- to C-terminus: Calcitonin receptor-stimulating peptide 2 (125 aa).

The N-terminal stretch at Met1–Ala25 is a signal peptide. The propeptide occupies Ala26 to Gln77. An intrachain disulfide couples Cys81 to Cys86.

This sequence belongs to the calcitonin family.

Its subcellular location is the secreted. The sequence is that of Calcitonin receptor-stimulating peptide 2 (CRSP2) from Capra hircus (Goat).